The chain runs to 129 residues: Large ribosomal subunit protein uL22 (129 aa).

The protein belongs to the universal ribosomal protein uL22 family. Part of the 50S ribosomal subunit.

Functionally, this protein binds specifically to 23S rRNA; its binding is stimulated by other ribosomal proteins, e.g. L4, L17, and L20. It is important during the early stages of 50S assembly. It makes multiple contacts with different domains of the 23S rRNA in the assembled 50S subunit and ribosome. Its function is as follows. The globular domain of the protein is located near the polypeptide exit tunnel on the outside of the subunit, while an extended beta-hairpin is found that lines the wall of the exit tunnel in the center of the 70S ribosome. The polypeptide is Large ribosomal subunit protein uL22 (Brucella abortus (strain 2308)).